Consider the following 82-residue polypeptide: Small ribosomal subunit protein bS16 (82 aa).

The protein belongs to the bacterial ribosomal protein bS16 family.

The polypeptide is Small ribosomal subunit protein bS16 (Serratia proteamaculans (strain 568)).